A 388-amino-acid chain; its full sequence is 5-hydroxytryptamine receptor 4 (388 aa).

Over Met1 to Lys19 the chain is Extracellular. N-linked (GlcNAc...) asparagine glycosylation occurs at Asn7. Residues Val20 to Val44 traverse the membrane as a helical segment. Residues Cys45–Lys54 are Cytoplasmic-facing. Residues Thr55–Ala78 traverse the membrane as a helical segment. Over Ile79–Phe92 the chain is Extracellular. A helical transmembrane segment spans residues Cys93–Asp117. The cysteines at positions 93 and 184 are disulfide-linked. Asp100 is a serotonin binding site. Topologically, residues Arg118–Met133 are cytoplasmic. Residues Thr134 to Ile157 form a helical membrane-spanning segment. The Extracellular portion of the chain corresponds to Met158–Val188. The helical transmembrane segment at Asn189–Tyr212 threads the bilayer. Topologically, residues Tyr213–Ala257 are cytoplasmic. Residues Ala258–Pro283 form a helical membrane-spanning segment. Asn279 is a binding site for serotonin. Over Phe284–Pro290 the chain is Extracellular. A helical membrane pass occupies residues Gly291–Phe314. Topologically, residues Leu315 to Thr388 are cytoplasmic.

Belongs to the G-protein coupled receptor 1 family. As to quaternary structure, interacts (via C-terminus 330-346 AA) with GRK5; this interaction is promoted by 5-HT (serotonin). Interacts with MAGI2, MPP3, NHERF1 and SNX27 isoforms 1 and 2. Forms a complex including NHERF1 and EZR. In terms of assembly, interacts with PATJ, NOS1 and SEC23A. Expressed in ileum, brain, and atrium, but not in the ventricle. In terms of tissue distribution, mainly expressed in atria and cardiac ventricle. As to expression, expressed in all cardiovascular tissues analyzed.

The protein resides in the cell membrane. The protein localises to the endosome membrane. In terms of biological role, G-protein coupled receptor for 5-hydroxytryptamine (serotonin), a biogenic hormone that functions as a neurotransmitter, a hormone and a mitogen. Ligand binding causes a conformation change that triggers signaling via guanine nucleotide-binding proteins (G proteins) and modulates the activity of downstream effectors. HTR4 is coupled to G(s) G alpha proteins and mediates activation of adenylate cyclase activity. The chain is 5-hydroxytryptamine receptor 4 from Homo sapiens (Human).